A 236-amino-acid polypeptide reads, in one-letter code: Rab-like protein 3 (236 aa).

The small GTPase-like stretch occupies residues 1 to 236 (MASLDRVKVL…AGTLKSLHYD (236 aa)). GTP contacts are provided by residues 16–21 (GVGKSS), 148–150 (KLD), and 179–180 (DC).

It belongs to the small GTPase superfamily. Rab family. Homodimer. Interacts with GPR89; the interaction stabilizes GPR89. Interacts with RAP1GDS1.

Functionally, required for KRAS signaling regulation and modulation of cell proliferation. Regulator of KRAS prenylation, and probably prenylation of other small GTPases. Required for lymphocyte development and function. Not required for myeloid cell development. This chain is Rab-like protein 3 (RABL3), found in Homo sapiens (Human).